A 96-amino-acid polypeptide reads, in one-letter code: SAGA-associated factor 11 (96 aa).

An SGF11-type zinc finger spans residues 68–89 (FHCKNCGRDVSANRFAAHLQRC).

This sequence belongs to the SGF11 family. In terms of assembly, component of the 1.8 MDa SAGA transcription coactivator-HAT complex. SAGA is built of 5 distinct domains with specialized functions. Within the SAGA complex, SUS1, SGF11, SGF73 and UBP8 form an additional subcomplex of SAGA called the DUB module (deubiquitination module). Interacts directly with SGF73, SUS1 and UBP8.

It is found in the nucleus. In terms of biological role, functions as a component of the transcription regulatory histone acetylation (HAT) complex SAGA. At the promoters, SAGA is required for recruitment of the basal transcription machinery. It influences RNA polymerase II transcriptional activity through different activities such as TBP interaction and promoter selectivity, interaction with transcription activators, and chromatin modification through histone acetylation and deubiquitination. SAGA acetylates nucleosomal histone H3 to some extent (to form H3K9ac, H3K14ac, H3K18ac and H3K23ac). SAGA interacts with DNA via upstream activating sequences (UASs). Involved in transcriptional regulation of a subset of SAGA-regulated genes. Within the SAGA complex, participates in a subcomplex, that specifically deubiquitinates histones H2B. The sequence is that of SAGA-associated factor 11 from Vanderwaltozyma polyspora (strain ATCC 22028 / DSM 70294 / BCRC 21397 / CBS 2163 / NBRC 10782 / NRRL Y-8283 / UCD 57-17) (Kluyveromyces polysporus).